The sequence spans 154 residues: Methylglyoxal synthase (154 aa).

The MGS-like domain occupies 1-154 (MELTTRTIAA…RYMQQRLDLK (154 aa)). Residues His-19, Lys-23, 45 to 48 (TGTT), and 65 to 66 (SG) each bind substrate. Asp-71 functions as the Proton donor/acceptor in the catalytic mechanism. His-98 provides a ligand contact to substrate.

Belongs to the methylglyoxal synthase family.

The enzyme catalyses dihydroxyacetone phosphate = methylglyoxal + phosphate. Catalyzes the formation of methylglyoxal from dihydroxyacetone phosphate. This is Methylglyoxal synthase from Yersinia pseudotuberculosis serotype O:1b (strain IP 31758).